The following is a 250-amino-acid chain: Phosphoribosylaminoimidazole-succinocarboxamide synthase (250 aa).

Belongs to the SAICAR synthetase family.

It catalyses the reaction 5-amino-1-(5-phospho-D-ribosyl)imidazole-4-carboxylate + L-aspartate + ATP = (2S)-2-[5-amino-1-(5-phospho-beta-D-ribosyl)imidazole-4-carboxamido]succinate + ADP + phosphate + 2 H(+). It functions in the pathway purine metabolism; IMP biosynthesis via de novo pathway; 5-amino-1-(5-phospho-D-ribosyl)imidazole-4-carboxamide from 5-amino-1-(5-phospho-D-ribosyl)imidazole-4-carboxylate: step 1/2. This chain is Phosphoribosylaminoimidazole-succinocarboxamide synthase, found in Bifidobacterium longum subsp. infantis (strain ATCC 15697 / DSM 20088 / JCM 1222 / NCTC 11817 / S12).